Consider the following 127-residue polypeptide: uncharacterized protein (127 aa).

3 consecutive transmembrane segments (helical) span residues 20-42 (NMIWLYEVYMLYKTYTSYFFMSS), 54-76 (IYFCYCANFIALFRVIFGTIFVY), and 91-110 (WILIYLKGSINSLLYMASFT).

It localises to the membrane. It is found in the cytoplasm. This is an uncharacterized protein from Schizosaccharomyces pombe (strain 972 / ATCC 24843) (Fission yeast).